A 294-amino-acid polypeptide reads, in one-letter code: Probable metallo-hydrolase BURPS1710b_2304 (294 aa).

Positions 68, 70, 72, 73, 143, 170, and 212 each coordinate a divalent metal cation.

This sequence belongs to the metallo-beta-lactamase superfamily. A divalent metal cation serves as cofactor.

Its function is as follows. Probable hydrolase. Does not have beta-lactamase activity. This Burkholderia pseudomallei (strain 1710b) protein is Probable metallo-hydrolase BURPS1710b_2304.